Here is a 361-residue protein sequence, read N- to C-terminus: S-adenosylmethionine:tRNA ribosyltransferase-isomerase (361 aa).

It belongs to the QueA family. As to quaternary structure, monomer.

It is found in the cytoplasm. It catalyses the reaction 7-aminomethyl-7-carbaguanosine(34) in tRNA + S-adenosyl-L-methionine = epoxyqueuosine(34) in tRNA + adenine + L-methionine + 2 H(+). It participates in tRNA modification; tRNA-queuosine biosynthesis. In terms of biological role, transfers and isomerizes the ribose moiety from AdoMet to the 7-aminomethyl group of 7-deazaguanine (preQ1-tRNA) to give epoxyqueuosine (oQ-tRNA). The sequence is that of S-adenosylmethionine:tRNA ribosyltransferase-isomerase from Actinobacillus pleuropneumoniae serotype 3 (strain JL03).